Here is a 937-residue protein sequence, read N- to C-terminus: Aconitate hydratase A (937 aa).

Residues 410 to 450 form a disordered region; the sequence is MANEGGFQPGSTSDLDNYNASWPGEGESAAANAEGRPSNPV. Residues 418–429 show a composition bias toward polar residues; it reads PGSTSDLDNYNA. Residues 433–444 are compositionally biased toward low complexity; sequence GEGESAAANAEG. [4Fe-4S] cluster contacts are provided by C475, C541, and C544.

It belongs to the aconitase/IPM isomerase family. Monomer. It depends on [4Fe-4S] cluster as a cofactor.

It carries out the reaction citrate = D-threo-isocitrate. It catalyses the reaction (2S,3R)-3-hydroxybutane-1,2,3-tricarboxylate = 2-methyl-cis-aconitate + H2O. It functions in the pathway carbohydrate metabolism; tricarboxylic acid cycle; isocitrate from oxaloacetate: step 2/2. Its pathway is organic acid metabolism; propanoate degradation. Its function is as follows. Involved in the catabolism of short chain fatty acids (SCFA) via the tricarboxylic acid (TCA)(acetyl degradation route) and probably via the 2-methylcitrate cycle I (propionate degradation route). Catalyzes the reversible isomerization of citrate to isocitrate via cis-aconitate. Could catalyze the hydration of 2-methyl-cis-aconitate to yield (2R,3S)-2-methylisocitrate. The apo form of AcnA functions as a RNA-binding regulatory protein. The protein is Aconitate hydratase A (acn) of Corynebacterium efficiens (strain DSM 44549 / YS-314 / AJ 12310 / JCM 11189 / NBRC 100395).